Reading from the N-terminus, the 268-residue chain is Tryptophan synthase alpha chain (268 aa).

Catalysis depends on proton acceptor residues Glu-49 and Asp-60.

The protein belongs to the TrpA family. Tetramer of two alpha and two beta chains.

The catalysed reaction is (1S,2R)-1-C-(indol-3-yl)glycerol 3-phosphate + L-serine = D-glyceraldehyde 3-phosphate + L-tryptophan + H2O. It participates in amino-acid biosynthesis; L-tryptophan biosynthesis; L-tryptophan from chorismate: step 5/5. Its function is as follows. The alpha subunit is responsible for the aldol cleavage of indoleglycerol phosphate to indole and glyceraldehyde 3-phosphate. The polypeptide is Tryptophan synthase alpha chain (Escherichia coli O157:H7).